Consider the following 155-residue polypeptide: Transcriptional repressor NrdR (155 aa).

The segment at 3 to 34 (CPFCGNVDTQVKDSRPAEDHVAIRRRRFCPAC) is a zinc-finger region. The ATP-cone domain occupies 49–139 (LVVIKSSGKR…VYKNFQAADD (91 aa)).

Belongs to the NrdR family. The cofactor is Zn(2+).

In terms of biological role, negatively regulates transcription of bacterial ribonucleotide reductase nrd genes and operons by binding to NrdR-boxes. The sequence is that of Transcriptional repressor NrdR from Dinoroseobacter shibae (strain DSM 16493 / NCIMB 14021 / DFL 12).